We begin with the raw amino-acid sequence, 171 residues long: Co-chaperone protein HscB (171 aa).

The J domain occupies 2 to 74 (DYFTLFGLPA…LTRAEYLLSL (73 aa)).

It belongs to the HscB family. Interacts with HscA and stimulates its ATPase activity. Interacts with IscU.

Co-chaperone involved in the maturation of iron-sulfur cluster-containing proteins. Seems to help targeting proteins to be folded toward HscA. The chain is Co-chaperone protein HscB from Citrobacter koseri (strain ATCC BAA-895 / CDC 4225-83 / SGSC4696).